Consider the following 374-residue polypeptide: 4-hydroxy-3-methylbut-2-en-1-yl diphosphate synthase (flavodoxin) (374 aa).

Positions 270, 273, 305, and 312 each coordinate [4Fe-4S] cluster.

The protein belongs to the IspG family. [4Fe-4S] cluster is required as a cofactor.

The enzyme catalyses (2E)-4-hydroxy-3-methylbut-2-enyl diphosphate + oxidized [flavodoxin] + H2O + 2 H(+) = 2-C-methyl-D-erythritol 2,4-cyclic diphosphate + reduced [flavodoxin]. It functions in the pathway isoprenoid biosynthesis; isopentenyl diphosphate biosynthesis via DXP pathway; isopentenyl diphosphate from 1-deoxy-D-xylulose 5-phosphate: step 5/6. Converts 2C-methyl-D-erythritol 2,4-cyclodiphosphate (ME-2,4cPP) into 1-hydroxy-2-methyl-2-(E)-butenyl 4-diphosphate. In Cellvibrio japonicus (strain Ueda107) (Pseudomonas fluorescens subsp. cellulosa), this protein is 4-hydroxy-3-methylbut-2-en-1-yl diphosphate synthase (flavodoxin).